Consider the following 437-residue polypeptide: Xylose isomerase (437 aa).

Residues His102 and Asp105 contribute to the active site. Mg(2+)-binding residues include Glu233, Glu269, His272, Asp297, Asp308, Asp310, and Asp340.

Belongs to the xylose isomerase family. In terms of assembly, homotetramer. Requires Mg(2+) as cofactor.

It is found in the cytoplasm. The enzyme catalyses alpha-D-xylose = alpha-D-xylulofuranose. This is Xylose isomerase from Novosphingobium aromaticivorans (strain ATCC 700278 / DSM 12444 / CCUG 56034 / CIP 105152 / NBRC 16084 / F199).